The primary structure comprises 1218 residues: Probable RNA-dependent RNA polymerase SHL2 (1218 aa).

Belongs to the RdRP family.

The catalysed reaction is RNA(n) + a ribonucleoside 5'-triphosphate = RNA(n+1) + diphosphate. In terms of biological role, involved in the RNA silencing pathway. Probably required for the generation of small interfering RNAs (siRNAs). Regulates shoot apical meristem (SAM) initiation and maintenance and leaf polarization through the trans-acting siRNAS (ta-siRNAs) pathway which probably modulates the expression of the ARF2, ARF3, ARF4, ARF14 and ARF15 genes. This chain is Probable RNA-dependent RNA polymerase SHL2 (SHL2), found in Oryza sativa subsp. japonica (Rice).